The sequence spans 218 residues: Adenylate kinase (218 aa).

10–15 (GAGKGT) serves as a coordination point for ATP. The tract at residues 30-59 (STGDMIRETIKSGSVLGQELKKVLDAGELV) is NMP. Residues T31, R36, 57-59 (ELV), and Q92 contribute to the AMP site. An LID region spans residues 122–159 (GRRIHPASGRTYHTKFNPPKVADKDDVTGEPLITRTDD). ATP contacts are provided by residues R123 and 132–133 (TY). Residues R156 and R167 each contribute to the AMP site. Residue Q202 coordinates ATP.

The protein belongs to the adenylate kinase family. In terms of assembly, monomer.

The protein resides in the cytoplasm. It carries out the reaction AMP + ATP = 2 ADP. It participates in purine metabolism; AMP biosynthesis via salvage pathway; AMP from ADP: step 1/1. In terms of biological role, catalyzes the reversible transfer of the terminal phosphate group between ATP and AMP. Plays an important role in cellular energy homeostasis and in adenine nucleotide metabolism. The protein is Adenylate kinase of Francisella tularensis subsp. holarctica (strain LVS).